The chain runs to 326 residues: DNA-binding death effector domain-containing protein 2 (326 aa).

The DED domain occupies 25 to 104 (SLHRMFEVVG…RHDLLPHLAR (80 aa)). A Nuclear localization signal motif is present at residues 104–109 (RKRRRP). The segment at 104–194 (RKRRRPVSPE…PARPSSEGKV (91 aa)) is disordered. The segment covering 136-146 (SSSSANSQQGQ) has biased composition (low complexity). Residues 155–173 (KRQRRSRGRPSGGARRRRR) carry the Bipartite nuclear localization signal motif. The segment covering 155–174 (KRQRRSRGRPSGGARRRRRG) has biased composition (basic residues). Low complexity predominate over residues 175-191 (APAAPQQQSEPARPSSE).

In terms of assembly, interacts with CASP8, CASP10 and GTF3C3. Homodimerizes and heterodimerizes with DEDD. Expressed in most tissues. High levels were found in liver, kidney, heart, ovary, spleen, testes, skeletal muscle and peripheral blood leukocytes. Expression was absent or low in colon and small intestine. Expression is relatively high in the tumor cell lines chronic myologenous leukemia K-562 and the colorectal adenocarcinoma SW480. Expression is moderate in the cervical carcinoma HeLa, the Burkitt's lymphoma Raji, the lung carcinoma A-549, and the melanoma G-361. In contrast, two leukemia cell lines, HL-60 (promyelocytic leukemia) and MOLT-4 (lymphoblastic leukemia), show relatively low levels.

The protein resides in the nucleus. It is found in the nucleolus. May play a critical role in death receptor-induced apoptosis and may target CASP8 and CASP10 to the nucleus. May regulate degradation of intermediate filaments during apoptosis. May play a role in the general transcription machinery in the nucleus and might be an important regulator of the activity of GTF3C3. The polypeptide is DNA-binding death effector domain-containing protein 2 (DEDD2) (Homo sapiens (Human)).